Reading from the N-terminus, the 127-residue chain is Fluoride-specific ion channel FluC (127 aa).

Transmembrane regions (helical) follow at residues 3 to 23 (LVFL…YFVG), 38 to 58 (LGTF…GHLA), 67 to 87 (FGIF…SYGL), and 102 to 122 (ISYV…GWFL). Gly-77 and Thr-80 together coordinate Na(+).

The protein belongs to the fluoride channel Fluc/FEX (TC 1.A.43) family.

The protein localises to the cell inner membrane. It carries out the reaction fluoride(in) = fluoride(out). With respect to regulation, na(+) is not transported, but it plays an essential structural role and its presence is essential for fluoride channel function. In terms of biological role, fluoride-specific ion channel. Important for reducing fluoride concentration in the cell, thus reducing its toxicity. This is Fluoride-specific ion channel FluC from Helicobacter acinonychis (strain Sheeba).